The primary structure comprises 582 residues: Formate--tetrahydrofolate ligase (582 aa).

65-72 (TPLGEGKT) serves as a coordination point for ATP.

This sequence belongs to the formate--tetrahydrofolate ligase family.

It catalyses the reaction (6S)-5,6,7,8-tetrahydrofolate + formate + ATP = (6R)-10-formyltetrahydrofolate + ADP + phosphate. It functions in the pathway one-carbon metabolism; tetrahydrofolate interconversion. This is Formate--tetrahydrofolate ligase from Aliivibrio fischeri (strain ATCC 700601 / ES114) (Vibrio fischeri).